A 225-amino-acid chain; its full sequence is Phosphatidylserine decarboxylase proenzyme (225 aa).

The active-site Schiff-base intermediate with substrate; via pyruvic acid is serine 182. Position 182 is a pyruvic acid (Ser); by autocatalysis (serine 182).

The protein belongs to the phosphatidylserine decarboxylase family. PSD-A subfamily. As to quaternary structure, heterodimer of a large membrane-associated beta subunit and a small pyruvoyl-containing alpha subunit. Pyruvate serves as cofactor. Is synthesized initially as an inactive proenzyme. Formation of the active enzyme involves a self-maturation process in which the active site pyruvoyl group is generated from an internal serine residue via an autocatalytic post-translational modification. Two non-identical subunits are generated from the proenzyme in this reaction, and the pyruvate is formed at the N-terminus of the alpha chain, which is derived from the carboxyl end of the proenzyme. The post-translation cleavage follows an unusual pathway, termed non-hydrolytic serinolysis, in which the side chain hydroxyl group of the serine supplies its oxygen atom to form the C-terminus of the beta chain, while the remainder of the serine residue undergoes an oxidative deamination to produce ammonia and the pyruvoyl prosthetic group on the alpha chain.

The protein resides in the cell membrane. The catalysed reaction is a 1,2-diacyl-sn-glycero-3-phospho-L-serine + H(+) = a 1,2-diacyl-sn-glycero-3-phosphoethanolamine + CO2. Its pathway is phospholipid metabolism; phosphatidylethanolamine biosynthesis; phosphatidylethanolamine from CDP-diacylglycerol: step 2/2. Functionally, catalyzes the formation of phosphatidylethanolamine (PtdEtn) from phosphatidylserine (PtdSer). This Neorickettsia sennetsu (strain ATCC VR-367 / Miyayama) (Ehrlichia sennetsu) protein is Phosphatidylserine decarboxylase proenzyme.